A 558-amino-acid polypeptide reads, in one-letter code: Dihydroxy-acid dehydratase (558 aa).

D81 is a binding site for Mg(2+). A [2Fe-2S] cluster-binding site is contributed by C122. Mg(2+) is bound by residues D123 and K124. The residue at position 124 (K124) is an N6-carboxylysine. C195 contributes to the [2Fe-2S] cluster binding site. Residue E447 participates in Mg(2+) binding. S473 acts as the Proton acceptor in catalysis.

Belongs to the IlvD/Edd family. Homodimer. Requires [2Fe-2S] cluster as cofactor. Mg(2+) serves as cofactor.

The catalysed reaction is (2R)-2,3-dihydroxy-3-methylbutanoate = 3-methyl-2-oxobutanoate + H2O. It carries out the reaction (2R,3R)-2,3-dihydroxy-3-methylpentanoate = (S)-3-methyl-2-oxopentanoate + H2O. It participates in amino-acid biosynthesis; L-isoleucine biosynthesis; L-isoleucine from 2-oxobutanoate: step 3/4. Its pathway is amino-acid biosynthesis; L-valine biosynthesis; L-valine from pyruvate: step 3/4. Functions in the biosynthesis of branched-chain amino acids. Catalyzes the dehydration of (2R,3R)-2,3-dihydroxy-3-methylpentanoate (2,3-dihydroxy-3-methylvalerate) into 2-oxo-3-methylpentanoate (2-oxo-3-methylvalerate) and of (2R)-2,3-dihydroxy-3-methylbutanoate (2,3-dihydroxyisovalerate) into 2-oxo-3-methylbutanoate (2-oxoisovalerate), the penultimate precursor to L-isoleucine and L-valine, respectively. This Bacillus pumilus (strain SAFR-032) protein is Dihydroxy-acid dehydratase.